Reading from the N-terminus, the 78-residue chain is MSRVCQVTGKRPMVGNNVSHANNKTRRRFLPNLHNHRFWVESENRFVRLRVSTKGMRIIDKLGIDKVLVDLRAQGQKV.

The protein belongs to the bacterial ribosomal protein bL28 family.

The protein is Large ribosomal subunit protein bL28 of Psychrobacter arcticus (strain DSM 17307 / VKM B-2377 / 273-4).